The primary structure comprises 600 residues: Aspartate--tRNA(Asp/Asn) ligase (600 aa).

An L-aspartate-binding site is contributed by glutamate 174. Positions 198–201 are aspartate; that stretch reads QLFK. Position 220 (arginine 220) interacts with L-aspartate. ATP-binding positions include 220–222 and glutamine 229; that span reads RDE. An L-aspartate-binding site is contributed by histidine 457. Glutamate 491 is an ATP binding site. Residue arginine 498 participates in L-aspartate binding. Residue 543–546 coordinates ATP; that stretch reads GLDR.

The protein belongs to the class-II aminoacyl-tRNA synthetase family. Type 1 subfamily. As to quaternary structure, homodimer.

Its subcellular location is the cytoplasm. The catalysed reaction is tRNA(Asx) + L-aspartate + ATP = L-aspartyl-tRNA(Asx) + AMP + diphosphate. Its function is as follows. Aspartyl-tRNA synthetase with relaxed tRNA specificity since it is able to aspartylate not only its cognate tRNA(Asp) but also tRNA(Asn). Reaction proceeds in two steps: L-aspartate is first activated by ATP to form Asp-AMP and then transferred to the acceptor end of tRNA(Asp/Asn). The sequence is that of Aspartate--tRNA(Asp/Asn) ligase from Burkholderia lata (strain ATCC 17760 / DSM 23089 / LMG 22485 / NCIMB 9086 / R18194 / 383).